Reading from the N-terminus, the 544-residue chain is MSIEQTLSQYLPSHPKPQGVTFTYGTAGFRMKADKLDYVTFTVGIIASLRSKYLQGKTVGVMITASHNPPEDNGVKVVDPLGSMLESSWEKYATDLANASPSPSNDSEGEKNSLVEVIKNLVSDLKIDLSIPANVVIARDSRESSPALSMATIDGFQSVPNTKYQDFGLFTTPELHYVTRTLNDPDFGKPTEDGYYSKLAKSFQEIYTICESNNEKIDITIDAANGVGAPKIQELLEKYLHKEISFTVVNGDYKQPNLLNFDCGADYVKTNQKLPKNVKPVNNKLYASFDGDADRLICYYQNNDNKFKLLDGDKLSTLFALFLQQLFKQIDPTKISLNIGVVQTAYANGSSTKYVEDVLKIPVRCTPTGVKHLHHEAENFDIGVYFEANGHGTVIFNPEAEKKIFDYKPNNDNEAKAIKVLQNFSQLINQTVGDAISDLLAVLIVVHYLKLSPSDWDNEYTDLPNKLVKVIVPDRSIFKTTNAERTLVEPKGMQDEIDKLVAQYPNGRSFVRASGTEDAVRVYAEADTQNNVEELSKAVSELVK.

Serine 66 functions as the Phosphoserine intermediate in the catalytic mechanism. 4 residues coordinate Mg(2+): serine 66, aspartate 290, aspartate 292, and aspartate 294. Residues 387-389 (EAN), 512-516 (RASGT), and arginine 521 contribute to the substrate site.

It belongs to the phosphohexose mutase family. Mg(2+) is required as a cofactor.

It carries out the reaction N-acetyl-alpha-D-glucosamine 1-phosphate = N-acetyl-D-glucosamine 6-phosphate. It functions in the pathway nucleotide-sugar biosynthesis; UDP-N-acetyl-alpha-D-glucosamine biosynthesis; N-acetyl-alpha-D-glucosamine 1-phosphate from alpha-D-glucosamine 6-phosphate (route I): step 2/2. Functionally, catalyzes the conversion of GlcNAc-6-P into GlcNAc-1-P during the synthesis of uridine diphosphate/UDP-GlcNAc, which is a biosynthetic precursor of chitin and also supplies the amino sugars for N-linked oligosaccharides of glycoproteins. This chain is Phosphoacetylglucosamine mutase, found in Candida albicans (Yeast).